A 433-amino-acid polypeptide reads, in one-letter code: Probable RNA 3'-terminal phosphate cyclase (433 aa).

Low complexity predominate over residues 1-10 (MGKNKNYNKN). A disordered region spans residues 1–28 (MGKNKNYNKNQFKKSKTNNDTTVAQQQQ). Positions 18 to 28 (NNDTTVAQQQQ) are enriched in polar residues. ATP contacts are provided by residues glutamine 137 and 328–332 (YLQDQ). The active-site Tele-AMP-histidine intermediate is histidine 354. Residues 400-433 (LNNNNNNSNSNTTTTTTTTTISTTTIDNQNSEEK) form a disordered region. Residues 401 to 425 (NNNNNNSNSNTTTTTTTTTISTTTI) are compositionally biased toward low complexity.

Belongs to the RNA 3'-terminal cyclase family. Type 1 subfamily.

The protein localises to the nucleus. It is found in the nucleoplasm. It carries out the reaction a 3'-end 3'-phospho-ribonucleotide-RNA + ATP = a 3'-end 2',3'-cyclophospho-ribonucleotide-RNA + AMP + diphosphate. In terms of biological role, catalyzes the conversion of 3'-phosphate to a 2',3'-cyclic phosphodiester at the end of RNA. The mechanism of action of the enzyme occurs in 3 steps: (A) adenylation of the enzyme by ATP; (B) transfer of adenylate to an RNA-N3'P to produce RNA-N3'PP5'A; (C) and attack of the adjacent 2'-hydroxyl on the 3'-phosphorus in the diester linkage to produce the cyclic end product. The biological role of this enzyme is unknown but it is likely to function in some aspects of cellular RNA processing. The sequence is that of Probable RNA 3'-terminal phosphate cyclase (rtca) from Dictyostelium discoideum (Social amoeba).